Here is a 670-residue protein sequence, read N- to C-terminus: DNA ligase (670 aa).

Residues 36 to 40, 84 to 85, and Glu-116 each bind NAD(+); these read DEEYD and SL. The N6-AMP-lysine intermediate role is filled by Lys-118. Residues Arg-139, Glu-177, Lys-293, and Lys-317 each contribute to the NAD(+) site. The Zn(2+) site is built by Cys-411, Cys-414, Cys-429, and Cys-434. One can recognise a BRCT domain in the interval 594-670; that stretch reads KKPSPLKGLT…SYEEFLKMLE (77 aa).

Belongs to the NAD-dependent DNA ligase family. LigA subfamily. The cofactor is Mg(2+). It depends on Mn(2+) as a cofactor.

The catalysed reaction is NAD(+) + (deoxyribonucleotide)n-3'-hydroxyl + 5'-phospho-(deoxyribonucleotide)m = (deoxyribonucleotide)n+m + AMP + beta-nicotinamide D-nucleotide.. Its function is as follows. DNA ligase that catalyzes the formation of phosphodiester linkages between 5'-phosphoryl and 3'-hydroxyl groups in double-stranded DNA using NAD as a coenzyme and as the energy source for the reaction. It is essential for DNA replication and repair of damaged DNA. The chain is DNA ligase from Thermodesulfovibrio yellowstonii (strain ATCC 51303 / DSM 11347 / YP87).